The following is a 208-amino-acid chain: Thymidylate kinase (208 aa).

10–17 (GGEGAGKS) contributes to the ATP binding site.

It belongs to the thymidylate kinase family.

The enzyme catalyses dTMP + ATP = dTDP + ADP. Functionally, phosphorylation of dTMP to form dTDP in both de novo and salvage pathways of dTTP synthesis. The polypeptide is Thymidylate kinase (Alcanivorax borkumensis (strain ATCC 700651 / DSM 11573 / NCIMB 13689 / SK2)).